A 394-amino-acid chain; its full sequence is uncharacterized protein (394 aa).

The next 12 helical transmembrane spans lie at 13-35 (AIIGIFMIFSLRVFGMFMIVPVL), 50-72 (VGVAIGIYGIFQIIFQIPYGWLS), 79-97 (LIINIGLLCFLLGNIIAWS), 107-129 (GRGLQGSGAISSVCMTLLSELVL), 136-158 (IMGLLGVSFGISFFLAVILSPII), 168-190 (FLINSLLSIFCLFFGMFYIPASL), 218-240 (INLSVFLIHFFLMCNFIIIPVEL), 250-272 (VPEIIYIVILLVSFLIVLFCICF), 277-299 (VLYSNITITTSAFLFVLCYGIFL), 309-331 (ILGLQIFFIAFIFLETILPALVN), 344-366 (AIYSTSQFLGSSMGGIIGGILFS), and 371-393 (FEVLFFEFVVSILWFITSILYLI).

It belongs to the major facilitator superfamily.

The protein resides in the cell membrane. This is an uncharacterized protein from Buchnera aphidicola subsp. Baizongia pistaciae (strain Bp).